We begin with the raw amino-acid sequence, 1148 residues long: Phospholipid-transporting ATPase IB (1148 aa).

Over 1-44 the chain is Cytoplasmic; the sequence is MSRATSVGDQLEAPARIIYLNQSHLNKFCDNRISTAKYSVLTFL. Thr-5 carries the post-translational modification Phosphothreonine. Residues 45–66 form a helical membrane-spanning segment; the sequence is PRFLYEQIRRAANAFFLFIALL. The Exoplasmic loop portion of the chain corresponds to 67–71; that stretch reads QQIPD. Residues 72-94 form a helical membrane-spanning segment; sequence VSPTGRYTTLVPLVIILTIAGIK. The Cytoplasmic segment spans residues 95–276; sequence EIIEDFKRHK…SNVEKVTNVQ (182 aa). Residues 277–298 traverse the membrane as a helical segment; sequence ILVLFGILLVMALVSSVGALFW. Residues 299-323 are Exoplasmic loop-facing; it reads NGSHGGKSWYIKKMDTNSDNFGYNL. The chain crosses the membrane as a helical span at residues 324-345; that stretch reads LTFIILYNNLIPISLLVTLEVV. At 346–837 the chain is on the cytoplasmic side; it reads KYTQALFINW…GAWSYNRVTK (492 aa). Asp-388 (4-aspartylphosphate intermediate) is an active-site residue. Positions 388, 389, 390, 488, 529, 552, 585, 665, 666, 667, 755, and 761 each coordinate ATP. Residue Asp-388 participates in Mg(2+) binding. Thr-390 is a binding site for Mg(2+). Asp-781 contributes to the Mg(2+) binding site. Positions 784 and 785 each coordinate ATP. Residue Asp-785 participates in Mg(2+) binding. Residues 838 to 858 traverse the membrane as a helical segment; it reads CILYCFYKNVVLYIIELWFAF. The Exoplasmic loop segment spans residues 859–870; that stretch reads VNGFSGQILFER. A helical membrane pass occupies residues 871-890; it reads WCIGLYNVIFTALPPFTLGI. Residues 891 to 920 lie on the Cytoplasmic side of the membrane; the sequence is FERSCTQESMLRFPQLYRITQNAEGFNTKV. The helical transmembrane segment at 921–942 threads the bilayer; the sequence is FWGHCINALVHSLILFWVPMKA. Residues 943-956 lie on the Exoplasmic loop side of the membrane; that stretch reads LEHDTPVTSGHATD. Residues 957-979 form a helical membrane-spanning segment; sequence YLFVGNIVYTYVVVTVCLKAGLE. At 980–985 the chain is on the cytoplasmic side; sequence TTAWTK. The helical transmembrane segment at 986–1006 threads the bilayer; that stretch reads FSHLAVWGSMLIWLVFFGVYS. Topologically, residues 1007 to 1024 are exoplasmic loop; the sequence is TIWPTIPIAPDMKGQATM. A helical membrane pass occupies residues 1025-1049; sequence VLSSAYFWLGLFLVPTACLIEDVAW. At 1050-1148 the chain is on the cytoplasmic side; the sequence is RAAKHTCKKT…DTTKENSRKK (99 aa).

Belongs to the cation transport ATPase (P-type) (TC 3.A.3) family. Type IV subfamily. Component of a P4-ATPase flippase complex which consists of a catalytic alpha subunit and an accessory beta subunit. Interacts with TMEM30A to form a flippase complex. Mg(2+) serves as cofactor. Found in testis, heart and brain. Most abundant in testis. Also detected in fetal tissues. Expressed in retinal photoreceptor cells; detected in retina outer nuclear layer and inner segment (at protein level).

The protein localises to the membrane. It is found in the golgi apparatus membrane. Its subcellular location is the endosome membrane. It localises to the cell membrane. The protein resides in the photoreceptor outer segment membrane. The protein localises to the photoreceptor inner segment membrane. The catalysed reaction is ATP + H2O + phospholipidSide 1 = ADP + phosphate + phospholipidSide 2.. It carries out the reaction a 1,2-diacyl-sn-glycero-3-phospho-L-serine(out) + ATP + H2O = a 1,2-diacyl-sn-glycero-3-phospho-L-serine(in) + ADP + phosphate + H(+). It catalyses the reaction a 1,2-diacyl-sn-glycero-3-phosphoethanolamine(in) + ATP + H2O = a 1,2-diacyl-sn-glycero-3-phosphoethanolamine(out) + ADP + phosphate + H(+). In terms of biological role, catalytic component of a P4-ATPase flippase complex which catalyzes the hydrolysis of ATP coupled to the transport of aminophospholipids from the outer to the inner leaflet of various membranes and ensures the maintenance of asymmetric distribution of phospholipids. Able to translocate phosphatidylserine, but not phosphatidylcholine. Phospholipid translocation also seems to be implicated in vesicle formation and in uptake of lipid signaling molecules. Reconstituted to liposomes, the ATP8A2:TMEM30A flippase complex predominantly transports phosphatidylserine (PS) and to a lesser extent phosphatidylethanolamine (PE). Phospholipid translocation is not associated with a countertransport of an inorganic ion or other charged substrate from the cytoplasmic side toward the exoplasm in connection with the phosphorylation from ATP. ATP8A2:TMEM30A may be involved in regulation of neurite outgrowth. Proposed to function in the generation and maintenance of phospholipid asymmetry in photoreceptor disk membranes and neuronal axon membranes. May be involved in vesicle trafficking in neuronal cells. Required for normal visual and auditory function; involved in photoreceptor and inner ear spiral ganglion cell survival. The polypeptide is Phospholipid-transporting ATPase IB (Mus musculus (Mouse)).